The chain runs to 644 residues: Macrolide export ATP-binding/permease protein MacB (644 aa).

The 239-residue stretch at 4–242 (IECKNINRYF…SNVGRIREKA (239 aa)) folds into the ABC transporter domain. 40-47 (GQSGSGKS) provides a ligand contact to ATP. 4 helical membrane-spanning segments follow: residues 270 to 290 (LLTMLGIIIGIASVVSVVALG), 524 to 544 (IALISLVVGGIGVMNIMLVSV), 574 to 594 (LICVIGGLVGVGLSAAVSLVF), and 607 to 627 (AMSVIGAVACSTGIGIAFGFM).

Belongs to the ABC transporter superfamily. Macrolide exporter (TC 3.A.1.122) family. As to quaternary structure, homodimer.

The protein localises to the cell inner membrane. In terms of biological role, non-canonical ABC transporter that contains transmembrane domains (TMD), which form a pore in the inner membrane, and an ATP-binding domain (NBD), which is responsible for energy generation. Confers resistance against macrolides. The protein is Macrolide export ATP-binding/permease protein MacB of Neisseria meningitidis serogroup B (strain ATCC BAA-335 / MC58).